Consider the following 132-residue polypeptide: Ribonuclease P protein component 4 (132 aa).

Residues cysteine 67, cysteine 70, cysteine 96, and cysteine 99 each contribute to the Zn(2+) site.

It belongs to the eukaryotic/archaeal RNase P protein component 4 family. In terms of assembly, consists of a catalytic RNA component and at least 4-5 protein subunits. Zn(2+) is required as a cofactor.

It is found in the cytoplasm. It carries out the reaction Endonucleolytic cleavage of RNA, removing 5'-extranucleotides from tRNA precursor.. Functionally, part of ribonuclease P, a protein complex that generates mature tRNA molecules by cleaving their 5'-ends. The chain is Ribonuclease P protein component 4 from Thermococcus kodakarensis (strain ATCC BAA-918 / JCM 12380 / KOD1) (Pyrococcus kodakaraensis (strain KOD1)).